Consider the following 164-residue polypeptide: Putative ankyrin repeat protein RBE_0585 (164 aa).

2 ANK repeats span residues 42-107 (NQDT…VAIL) and 126-149 (DKDTPLIEAARAALPQSISFMLDY).

The sequence is that of Putative ankyrin repeat protein RBE_0585 from Rickettsia bellii (strain RML369-C).